The sequence spans 162 residues: ATP synthase subunit b (162 aa).

A helical membrane pass occupies residues 2–22; sequence LEFNATLLAQIVDFIILLIFL.

The protein belongs to the ATPase B chain family. F-type ATPases have 2 components, F(1) - the catalytic core - and F(0) - the membrane proton channel. F(1) has five subunits: alpha(3), beta(3), gamma(1), delta(1), epsilon(1). F(0) has three main subunits: a(1), b(2) and c(10-14). The alpha and beta chains form an alternating ring which encloses part of the gamma chain. F(1) is attached to F(0) by a central stalk formed by the gamma and epsilon chains, while a peripheral stalk is formed by the delta and b chains.

The protein localises to the cell membrane. Functionally, f(1)F(0) ATP synthase produces ATP from ADP in the presence of a proton or sodium gradient. F-type ATPases consist of two structural domains, F(1) containing the extramembraneous catalytic core and F(0) containing the membrane proton channel, linked together by a central stalk and a peripheral stalk. During catalysis, ATP synthesis in the catalytic domain of F(1) is coupled via a rotary mechanism of the central stalk subunits to proton translocation. In terms of biological role, component of the F(0) channel, it forms part of the peripheral stalk, linking F(1) to F(0). The polypeptide is ATP synthase subunit b (Pelotomaculum thermopropionicum (strain DSM 13744 / JCM 10971 / SI)).